The sequence spans 262 residues: Capsid protein (262 aa).

Residues 183–262 (APTIEAITRP…SHHRSPSPRK (80 aa)) form a disordered region. Positions 215-233 (RRRKVKTTFVYGRRRSKSR) match the Bipartite nuclear localization signal motif. Residues 215-234 (RRRKVKTTFVYGRRRSKSRE) show a composition bias toward basic residues. Phosphoserine; by host occurs at positions 232, 239, and 245. Positions 252–262 (SSHHRSPSPRK) are enriched in basic residues. The segment at 254 to 260 (HHRSPSP) is RNA binding.

This sequence belongs to the avihepadnavirus core antigen family. Homodimerizes, then multimerizes.

The protein localises to the virion. It is found in the host cytoplasm. Its function is as follows. Self assembles to form an icosahedral capsid. Most capsid appear to be large particles with an icosahedral symmetry of T=4 and consist of 240 copies of capsid protein, though a fraction forms smaller T=3 particles consisting of 180 capsid proteins. Entering capsid are transported along microtubules to the nucleus. Phosphorylation of the capsid is thought to induce exposure of nuclear localization signal in the C-terminal portion of the capsid protein that allows binding to the nuclear pore complex via the importin (karyopherin-) alpha and beta. Capsids are imported in intact form through the nuclear pore into the nuclear basket, where it probably binds NUP153. Only capsids that contain the mature viral genome can release the viral DNA and capsid protein into the nucleoplasm. Immature capsids get stucked in the basket. Capsids encapsulate the pre-genomic RNA and the P protein. Pre-genomic RNA is reverse transcribed into DNA while the capsid is still in the cytoplasm. The capsid can then either be directed to the nucleus, providing more genome for transcription, or bud through the endoplasmic reticulum to provide new virions. This Anas (ducks) protein is Capsid protein (C).